Here is a 630-residue protein sequence, read N- to C-terminus: Probable potassium transport system protein Kup 2 (630 aa).

The next 12 membrane-spanning stretches (helical) occupy residues 17–37, 56–76, 108–128, 145–165, 176–196, 214–234, 255–275, 293–313, 345–365, 375–395, 402–422, and 427–447; these read FWAL…TSPL, VIVL…VTAK, VFLM…SMIT, PALE…LFAF, AFGP…LIHI, FMLS…LAVT, WLFF…ALVL, FLVP…QAVI, IYLP…VLLF, YGIA…VVIW, PAAA…FFSA, and LLEG…LIWV.

It belongs to the HAK/KUP transporter (TC 2.A.72) family.

It is found in the cell inner membrane. The catalysed reaction is K(+)(in) + H(+)(in) = K(+)(out) + H(+)(out). In terms of biological role, transport of potassium into the cell. Likely operates as a K(+):H(+) symporter. This Rhodopseudomonas palustris (strain BisB18) protein is Probable potassium transport system protein Kup 2.